Consider the following 411-residue polypeptide: Serine hydroxymethyltransferase (411 aa).

120–122 (GHL) contacts (6S)-5,6,7,8-tetrahydrofolate. Position 225 is an N6-(pyridoxal phosphate)lysine (K225). 350–352 (SPF) contributes to the (6S)-5,6,7,8-tetrahydrofolate binding site.

This sequence belongs to the SHMT family. Homodimer. It depends on pyridoxal 5'-phosphate as a cofactor.

The protein resides in the cytoplasm. The enzyme catalyses (6R)-5,10-methylene-5,6,7,8-tetrahydrofolate + glycine + H2O = (6S)-5,6,7,8-tetrahydrofolate + L-serine. It participates in one-carbon metabolism; tetrahydrofolate interconversion. Its pathway is amino-acid biosynthesis; glycine biosynthesis; glycine from L-serine: step 1/1. Catalyzes the reversible interconversion of serine and glycine with tetrahydrofolate (THF) serving as the one-carbon carrier. This reaction serves as the major source of one-carbon groups required for the biosynthesis of purines, thymidylate, methionine, and other important biomolecules. Also exhibits THF-independent aldolase activity toward beta-hydroxyamino acids, producing glycine and aldehydes, via a retro-aldol mechanism. This is Serine hydroxymethyltransferase from Lactobacillus johnsonii (strain CNCM I-12250 / La1 / NCC 533).